The following is a 509-amino-acid chain: Maturase K (509 aa).

It belongs to the intron maturase 2 family. MatK subfamily.

The protein localises to the plastid. The protein resides in the chloroplast. Functionally, usually encoded in the trnK tRNA gene intron. Probably assists in splicing its own and other chloroplast group II introns. In Nicotiana glauca (Glaucous tobacco), this protein is Maturase K.